The following is a 60-amino-acid chain: Small, acid-soluble spore protein 1 (60 aa).

The protein belongs to the alpha/beta-type SASP family. SASP are degraded in the first minutes of spore germination and provide amino acids for both new protein synthesis and metabolism.

Its function is as follows. SASP are bound to spore DNA. They are double-stranded DNA-binding proteins that cause DNA to change to an a-like conformation. They protect the DNA backbone from chemical and enzymatic cleavage and are thus involved in dormant spore's high resistance to UV light. The polypeptide is Small, acid-soluble spore protein 1 (ssp1) (Clostridium perfringens (strain 13 / Type A)).